A 31-amino-acid chain; its full sequence is MSDINATRLPAWLVDCPCVGDDVNRLLTRGE.

Positions 1–10 are excised as a propeptide; it reads MSDINATRLP. Residues 11 to 17 constitute a cross-link (cyclopeptide (Ala-Pro)); that stretch reads AWLVDCP. Positions 12-16 form a cross-link, 2'-cysteinyl-6'-hydroxytryptophan sulfoxide (Trp-Cys); the sequence is WLVDC. Positions 18 to 31 are excised as a propeptide; sequence CVGDDVNRLLTRGE.

This sequence belongs to the MSDIN fungal toxin family. Processed by the macrocyclase-peptidase enzyme POPB to yield a toxic cyclic heptapeptide. POPB first removes 10 residues from the N-terminus. Conformational trapping of the remaining peptide forces the enzyme to release this intermediate rather than proceed to macrocyclization. The enzyme rebinds the remaining peptide in a different conformation and catalyzes macrocyclization of the N-terminal 7 residues.

Major toxin that belongs to the bicyclic heptapeptides called phallotoxins. Although structurally related to amatoxins, phallotoxins have a different mode of action, which is the stabilization of F-actin. Phallotoxins are poisonous when administered parenterally, but not orally because of poor absorption. The sequence is that of Phallacidin proprotein 1 (PHA1_2) from Amanita bisporigera (Destroying angel).